We begin with the raw amino-acid sequence, 288 residues long: ATP synthase gamma chain (288 aa).

Belongs to the ATPase gamma chain family. As to quaternary structure, F-type ATPases have 2 components, CF(1) - the catalytic core - and CF(0) - the membrane proton channel. CF(1) has five subunits: alpha(3), beta(3), gamma(1), delta(1), epsilon(1). CF(0) has three main subunits: a, b and c.

It is found in the cell inner membrane. Functionally, produces ATP from ADP in the presence of a proton gradient across the membrane. The gamma chain is believed to be important in regulating ATPase activity and the flow of protons through the CF(0) complex. This is ATP synthase gamma chain from Rickettsia bellii (strain RML369-C).